We begin with the raw amino-acid sequence, 448 residues long: Homogentisate 1,2-dioxygenase (448 aa).

The Proton acceptor role is filled by H303. Fe cation-binding residues include H346 and E352. Homogentisate is bound by residues Y361 and H382. Residue H382 participates in Fe cation binding.

This sequence belongs to the homogentisate dioxygenase family. Hexamer; dimer of trimers. It depends on Fe cation as a cofactor.

The catalysed reaction is homogentisate + O2 = 4-maleylacetoacetate + H(+). It functions in the pathway amino-acid degradation; L-phenylalanine degradation; acetoacetate and fumarate from L-phenylalanine: step 4/6. In terms of biological role, involved in the catabolism of homogentisate (2,5-dihydroxyphenylacetate or 2,5-OH-PhAc), a central intermediate in the degradation of phenylalanine and tyrosine. Catalyzes the oxidative ring cleavage of the aromatic ring of homogentisate to yield maleylacetoacetate. The protein is Homogentisate 1,2-dioxygenase of Rhodopseudomonas palustris (strain HaA2).